A 173-amino-acid chain; its full sequence is ATP synthase subunit b (173 aa).

Residues isoleucine 20–glycine 40 traverse the membrane as a helical segment.

The protein belongs to the ATPase B chain family. F-type ATPases have 2 components, F(1) - the catalytic core - and F(0) - the membrane proton channel. F(1) has five subunits: alpha(3), beta(3), gamma(1), delta(1), epsilon(1). F(0) has three main subunits: a(1), b(2) and c(10-14). The alpha and beta chains form an alternating ring which encloses part of the gamma chain. F(1) is attached to F(0) by a central stalk formed by the gamma and epsilon chains, while a peripheral stalk is formed by the delta and b chains.

The protein localises to the cell membrane. In terms of biological role, f(1)F(0) ATP synthase produces ATP from ADP in the presence of a proton or sodium gradient. F-type ATPases consist of two structural domains, F(1) containing the extramembraneous catalytic core and F(0) containing the membrane proton channel, linked together by a central stalk and a peripheral stalk. During catalysis, ATP synthesis in the catalytic domain of F(1) is coupled via a rotary mechanism of the central stalk subunits to proton translocation. Component of the F(0) channel, it forms part of the peripheral stalk, linking F(1) to F(0). This chain is ATP synthase subunit b, found in Lysinibacillus sphaericus (strain C3-41).